Consider the following 416-residue polypeptide: Serine hydroxymethyltransferase (416 aa).

(6S)-5,6,7,8-tetrahydrofolate contacts are provided by residues Leu120 and 124 to 126 (GHL). N6-(pyridoxal phosphate)lysine is present on Lys230. Glu246 contributes to the (6S)-5,6,7,8-tetrahydrofolate binding site.

This sequence belongs to the SHMT family. Homodimer. Requires pyridoxal 5'-phosphate as cofactor.

It localises to the cytoplasm. The enzyme catalyses (6R)-5,10-methylene-5,6,7,8-tetrahydrofolate + glycine + H2O = (6S)-5,6,7,8-tetrahydrofolate + L-serine. It participates in one-carbon metabolism; tetrahydrofolate interconversion. The protein operates within amino-acid biosynthesis; glycine biosynthesis; glycine from L-serine: step 1/1. Functionally, catalyzes the reversible interconversion of serine and glycine with tetrahydrofolate (THF) serving as the one-carbon carrier. This reaction serves as the major source of one-carbon groups required for the biosynthesis of purines, thymidylate, methionine, and other important biomolecules. Also exhibits THF-independent aldolase activity toward beta-hydroxyamino acids, producing glycine and aldehydes, via a retro-aldol mechanism. This chain is Serine hydroxymethyltransferase, found in Onion yellows phytoplasma (strain OY-M).